Consider the following 298-residue polypeptide: MKSDLETPLNLEELAFSHISVLGREVIEGLAVRPGGHYLDVTVGGGGHSRLILEAAADVRVTAVDQDEDALVAANKNLAEYSDRIQFIYSNFADYEFPPNTFDGILADLGVSSYHLDQAERGFSFRQAANLDMRMDRGRSLTAADVINNWDEAELADIFFKYGEERLSRRIARRIVERRPLHTTTELADAIASSVPPKYRYGRIHPATRVFQALRIVVNDELKSLETFLDKAPNALVPGGRIAIISFHSLEDRPVKHGLRNSPLLKVLTKKPIIAQEEEISNNPRSRSAKLRIAEKLV.

S-adenosyl-L-methionine contacts are provided by residues 46-48, Asp65, Phe92, Asp108, and His115; that span reads GGH.

This sequence belongs to the methyltransferase superfamily. RsmH family.

The protein localises to the cytoplasm. The catalysed reaction is cytidine(1402) in 16S rRNA + S-adenosyl-L-methionine = N(4)-methylcytidine(1402) in 16S rRNA + S-adenosyl-L-homocysteine + H(+). Functionally, specifically methylates the N4 position of cytidine in position 1402 (C1402) of 16S rRNA. This chain is Ribosomal RNA small subunit methyltransferase H, found in Nostoc punctiforme (strain ATCC 29133 / PCC 73102).